Consider the following 356-residue polypeptide: Butyrate kinase (356 aa).

Belongs to the acetokinase family.

It is found in the cytoplasm. The enzyme catalyses butanoate + ATP = butanoyl phosphate + ADP. It participates in lipid metabolism; butanoate metabolism. Functionally, catalyzes the conversion of butyryl-CoA through butyryl phosphate to butyrate. This chain is Butyrate kinase (buk), found in Clostridium perfringens (strain 13 / Type A).